The primary structure comprises 79 residues: Conotoxin ArMSGL-0121 (79 aa).

The N-terminal stretch at 1–20 (MSRLGIMVLTLLLLVFIVTS) is a signal peptide. A propeptide spanning residues 21-44 (HQDAGEKQATQRNAINFRWRRSFT) is cleaved from the precursor. 3 disulfides stabilise this stretch: Cys-52-Cys-64, Cys-56-Cys-73, and Cys-63-Cys-77. Leu-78 bears the Leucine amide mark.

It belongs to the conotoxin O3 superfamily. As to expression, expressed by the venom duct.

Its subcellular location is the secreted. The protein is Conotoxin ArMSGL-0121 of Conus arenatus (Sand-dusted cone).